Consider the following 79-residue polypeptide: Exodeoxyribonuclease 7 small subunit (79 aa).

This sequence belongs to the XseB family. Heterooligomer composed of large and small subunits.

The protein localises to the cytoplasm. The enzyme catalyses Exonucleolytic cleavage in either 5'- to 3'- or 3'- to 5'-direction to yield nucleoside 5'-phosphates.. In terms of biological role, bidirectionally degrades single-stranded DNA into large acid-insoluble oligonucleotides, which are then degraded further into small acid-soluble oligonucleotides. The protein is Exodeoxyribonuclease 7 small subunit of Syntrophus aciditrophicus (strain SB).